Here is a 604-residue protein sequence, read N- to C-terminus: UvrABC system protein C (604 aa).

A GIY-YIG domain is found at 10–89; the sequence is ELPGVYLMKD…VKKNRPHYNI (80 aa). The UVR domain occupies 199–234; the sequence is SGTIKELQEKMNIHAIAQEYESAAVIRDQIDALKSL.

The protein belongs to the UvrC family. As to quaternary structure, interacts with UvrB in an incision complex.

The protein localises to the cytoplasm. Functionally, the UvrABC repair system catalyzes the recognition and processing of DNA lesions. UvrC both incises the 5' and 3' sides of the lesion. The N-terminal half is responsible for the 3' incision and the C-terminal half is responsible for the 5' incision. The chain is UvrABC system protein C from Methanococcoides burtonii (strain DSM 6242 / NBRC 107633 / OCM 468 / ACE-M).